Reading from the N-terminus, the 197-residue chain is Imidazoleglycerol-phosphate dehydratase (197 aa).

It belongs to the imidazoleglycerol-phosphate dehydratase family.

The protein resides in the cytoplasm. It catalyses the reaction D-erythro-1-(imidazol-4-yl)glycerol 3-phosphate = 3-(imidazol-4-yl)-2-oxopropyl phosphate + H2O. It participates in amino-acid biosynthesis; L-histidine biosynthesis; L-histidine from 5-phospho-alpha-D-ribose 1-diphosphate: step 6/9. The sequence is that of Imidazoleglycerol-phosphate dehydratase from Erythrobacter litoralis (strain HTCC2594).